The primary structure comprises 444 residues: Sprouty-related, EVH1 domain-containing protein 1 (444 aa).

Ser-2 carries the N-acetylserine modification. A WH1 domain is found at Ala-6–Ile-123. Position 225 is an N6-methyllysine (Lys-225). The 53-residue stretch at Ser-234–Gln-286 folds into the KBD domain. Position 239 is a phosphoserine (Ser-239). The disordered stretch occupies residues Trp-268–Asp-287. Ser-309 carries the phosphoserine modification. Residues Ser-333–Gly-444 form a required for interaction with TESK1 region. In terms of domain architecture, SPR spans Arg-334–Ala-442.

As to quaternary structure, homodimer and heterodimer. Able to interact with SPRED2 to form heterodimers. Interacts (via C-terminus) with TAOK1/MARKK (via C-terminus); the interaction does not affect TAOK1 kinase activity. Interacts (via C-terminus) with TESK1 (via C-terminus); the interaction inhibits TESK1 kinase activity. Interacts with CAV1. Interacts with RAS. Interacts with palmitoyltransferase ZDHHC17/HIP14; the interaction leads to palmitoylation of SPRED1. Post-translationally, palmitoylated by ZDHHC17/HIP14. In terms of processing, ubiquitinated. Phosphorylated on tyrosine. Expressed in brain. Weakly expressed in lung, heart, liver, kidney, intestine, spleen, testis, thymus, colon and ovary. Also expressed in embryonic tissues such as heart, lung, liver and brain. Highly expressed in IL3-dependent hematopoietic cell lines (Ba/F3 and MC/9) and bone marrow-derived mast cells (BMMC).

The protein localises to the cell membrane. Its subcellular location is the membrane. It is found in the caveola. The protein resides in the nucleus. Functionally, tyrosine kinase substrate that inhibits growth-factor-mediated activation of MAP kinase. Negatively regulates hematopoiesis of bone marrow. Inhibits fibroblast growth factor (FGF)-induced retinal lens fiber differentiation, probably by inhibiting FGF-mediated phosphorylation of ERK1/2. Attenuates actin stress fiber formation via inhibition of TESK1-mediated phosphorylation of cofilin. Inhibits TGFB-induced epithelial-to-mesenchymal transition in lens epithelial cells. In Mus musculus (Mouse), this protein is Sprouty-related, EVH1 domain-containing protein 1 (Spred1).